Consider the following 90-residue polypeptide: Elongation factor 1-beta (90 aa).

This sequence belongs to the EF-1-beta/EF-1-delta family.

Promotes the exchange of GDP for GTP in EF-1-alpha/GDP, thus allowing the regeneration of EF-1-alpha/GTP that could then be used to form the ternary complex EF-1-alpha/GTP/AAtRNA. The chain is Elongation factor 1-beta from Desulfurococcus amylolyticus (strain DSM 18924 / JCM 16383 / VKM B-2413 / 1221n) (Desulfurococcus kamchatkensis).